A 127-amino-acid polypeptide reads, in one-letter code: Aspartate 1-decarboxylase (127 aa).

The active-site Schiff-base intermediate with substrate; via pyruvic acid is Ser25. At Ser25 the chain carries Pyruvic acid (Ser). Residue Thr57 coordinates substrate. Tyr58 acts as the Proton donor in catalysis. Position 73–75 (Gly73–Ala75) interacts with substrate.

It belongs to the PanD family. As to quaternary structure, heterooctamer of four alpha and four beta subunits. The cofactor is pyruvate. In terms of processing, is synthesized initially as an inactive proenzyme, which is activated by self-cleavage at a specific serine bond to produce a beta-subunit with a hydroxyl group at its C-terminus and an alpha-subunit with a pyruvoyl group at its N-terminus.

It localises to the cytoplasm. The catalysed reaction is L-aspartate + H(+) = beta-alanine + CO2. Its pathway is cofactor biosynthesis; (R)-pantothenate biosynthesis; beta-alanine from L-aspartate: step 1/1. Catalyzes the pyruvoyl-dependent decarboxylation of aspartate to produce beta-alanine. The chain is Aspartate 1-decarboxylase from Shouchella clausii (strain KSM-K16) (Alkalihalobacillus clausii).